A 701-amino-acid polypeptide reads, in one-letter code: Low-density lipoprotein receptor-related protein 12 (701 aa).

At 1 to 334 (GKSEEPNCAC…ENCPVIVPTR (334 aa)) the chain is on the extracellular side. LDL-receptor class A domains lie at 7-43 (NCAC…EICA) and 56-97 (PCAY…IDCD). Intrachain disulfides connect Cys-8–Cys-20, Cys-15–Cys-33, Cys-27–Cys-42, Cys-57–Cys-74, Cys-64–Cys-87, Cys-81–Cys-96, and Cys-101–Cys-127. In terms of domain architecture, CUB spans 101–214 (CGQWLKYFYG…RGFNATYQVD (114 aa)). N-linked (GlcNAc...) asparagine glycans are attached at residues Asn-126 and Asn-208. 3 LDL-receptor class A domains span residues 216 to 253 (FCLP…INCT), 254 to 291 (MCQK…KNCF), and 292 to 328 (FCQP…ENCP). 9 disulfide bridges follow: Cys-217–Cys-230, Cys-224–Cys-243, Cys-237–Cys-252, Cys-255–Cys-268, Cys-262–Cys-281, Cys-275–Cys-290, Cys-293–Cys-305, Cys-300–Cys-318, and Cys-312–Cys-327. N-linked (GlcNAc...) asparagine glycosylation is present at Asn-251. A glycan (N-linked (GlcNAc...) asparagine) is linked at Asn-283. A helical transmembrane segment spans residues 335–355 (VITAAVIGSLICGLLLVIALG). Topologically, residues 356–701 (CTCKLYSLRM…TSDDEALLLC (346 aa)) are cytoplasmic. 4 disordered regions span residues 465–520 (ADGD…LPQK), 535–565 (ASSS…SPAR), 590–612 (SSVS…REDD), and 643–665 (DQGQ…SNRD). Composition is skewed to polar residues over residues 590–599 (SSVSQNQSPL) and 643–656 (DQGQ…SATN).

This sequence belongs to the LDLR family. In terms of assembly, may interact with RACK1, ZFYVE9 and NMRK2.

The protein resides in the membrane. Its subcellular location is the coated pit. Functionally, probable receptor, which may be involved in the internalization of lipophilic molecules and/or signal transduction. May act as a tumor suppressor. The protein is Low-density lipoprotein receptor-related protein 12 (LRP12) of Macaca fascicularis (Crab-eating macaque).